The sequence spans 640 residues: Threonine--tRNA ligase (640 aa).

One can recognise a TGS domain in the interval 1–61 (MPTITLPDGS…ERDASLQIIT (61 aa)). The catalytic stretch occupies residues 242-533 (DHRRIGKQLD…LIEHYAGAFP (292 aa)). Positions 333, 384, and 510 each coordinate Zn(2+).

This sequence belongs to the class-II aminoacyl-tRNA synthetase family. In terms of assembly, homodimer. Zn(2+) serves as cofactor.

Its subcellular location is the cytoplasm. It catalyses the reaction tRNA(Thr) + L-threonine + ATP = L-threonyl-tRNA(Thr) + AMP + diphosphate + H(+). Functionally, catalyzes the attachment of threonine to tRNA(Thr) in a two-step reaction: L-threonine is first activated by ATP to form Thr-AMP and then transferred to the acceptor end of tRNA(Thr). Also edits incorrectly charged L-seryl-tRNA(Thr). This chain is Threonine--tRNA ligase, found in Stutzerimonas stutzeri (strain A1501) (Pseudomonas stutzeri).